The sequence spans 464 residues: Phosphoenolpyruvate carboxylase (464 aa).

The protein belongs to the PEPCase type 2 family. Homotetramer. It depends on Mg(2+) as a cofactor.

The enzyme catalyses oxaloacetate + phosphate = phosphoenolpyruvate + hydrogencarbonate. Its function is as follows. Catalyzes the irreversible beta-carboxylation of phosphoenolpyruvate (PEP) to form oxaloacetate (OAA), a four-carbon dicarboxylic acid source for the tricarboxylic acid cycle. The protein is Phosphoenolpyruvate carboxylase of Thermofilum pendens (strain DSM 2475 / Hrk 5).